The following is a 779-amino-acid chain: Acyl-CoA dehydrogenase family member 11 (779 aa).

An N6-acetyllysine modification is found at lysine 175. Serine 210 is modified (phosphoserine). Tyrosine 323 is modified (phosphotyrosine). N6-succinyllysine is present on residues lysine 368 and lysine 390. FAD is bound by residues 503–513, 511–513, 537–539, and serine 539; these read FCMTEPNVSSS, SSS, and WSS. Serine 513 provides a ligand contact to substrate. 628-631 provides a ligand contact to substrate; the sequence is GPGR. FAD contacts are provided by residues arginine 656, glutamine 726, and 726-730; that span reads QVHGG. Glycine 754 serves as a coordination point for substrate. Residues 755–757 and glutamate 757 each bind FAD; that span reads PDE. Lysine 765 is modified (N6-acetyllysine).

This sequence belongs to the acyl-CoA dehydrogenase family. As to quaternary structure, homodimer. Requires FAD as cofactor.

Its subcellular location is the peroxisome. The protein resides in the mitochondrion membrane. The catalysed reaction is a 2,3-saturated acyl-CoA + oxidized [electron-transfer flavoprotein] + H(+) = a (2E)-enoyl-CoA + reduced [electron-transfer flavoprotein]. The enzyme catalyses docosanoyl-CoA + oxidized [electron-transfer flavoprotein] + H(+) = (2E)-docosenoyl-CoA + reduced [electron-transfer flavoprotein]. It carries out the reaction tetracosanoyl-CoA + oxidized [electron-transfer flavoprotein] + H(+) = (2E)-tetracosenoyl-CoA + reduced [electron-transfer flavoprotein]. It catalyses the reaction eicosanoyl-CoA + oxidized [electron-transfer flavoprotein] + H(+) = (2E)-eicosenoyl-CoA + reduced [electron-transfer flavoprotein]. The catalysed reaction is hexacosanoyl-CoA + oxidized [electron-transfer flavoprotein] + H(+) = (2E)-hexacosenoyl-CoA + reduced [electron-transfer flavoprotein]. The enzyme catalyses tricosanoyl-CoA + oxidized [electron-transfer flavoprotein] + H(+) = (2E)-tricosenoyl-CoA + reduced [electron-transfer flavoprotein]. It participates in lipid metabolism; fatty acid beta-oxidation. Its function is as follows. Acyl-CoA dehydrogenase, that exhibits maximal activity towards saturated C22-CoA. Probably participates in beta-oxydation and energy production but could also play a role in the metabolism of specific fatty acids to control fatty acids composition of cellular lipids in brain. In Rattus norvegicus (Rat), this protein is Acyl-CoA dehydrogenase family member 11 (Acad11).